Reading from the N-terminus, the 78-residue chain is Translation initiation factor IF-1 (78 aa).

An S1-like domain is found at 2-78 (SKNNLNETES…TRARITYRFK (77 aa)).

The protein belongs to the IF-1 family. In terms of assembly, component of the 30S ribosomal translation pre-initiation complex which assembles on the 30S ribosome in the order IF-2 and IF-3, IF-1 and N-formylmethionyl-tRNA(fMet); mRNA recruitment can occur at any time during PIC assembly.

The protein localises to the cytoplasm. One of the essential components for the initiation of protein synthesis. Stabilizes the binding of IF-2 and IF-3 on the 30S subunit to which N-formylmethionyl-tRNA(fMet) subsequently binds. Helps modulate mRNA selection, yielding the 30S pre-initiation complex (PIC). Upon addition of the 50S ribosomal subunit IF-1, IF-2 and IF-3 are released leaving the mature 70S translation initiation complex. The chain is Translation initiation factor IF-1 from Onion yellows phytoplasma (strain OY-M).